We begin with the raw amino-acid sequence, 297 residues long: PIH1 domain-containing protein 1 (297 aa).

Belongs to the PIH1 family.

The protein localises to the nucleus. In terms of biological role, involved in the assembly of C/D box small nucleolar ribonucleoprotein (snoRNP) particles. Recruits the SWI/SNF complex to the core promoter of rRNA genes and enhances pre-rRNA transcription. Mediates interaction of TELO2 with the R2TP complex which is necessary for the stability of MTOR and SMG1. Positively regulates the assembly and activity of the mTORC1 complex. This Xenopus laevis (African clawed frog) protein is PIH1 domain-containing protein 1 (pih1d1).